Reading from the N-terminus, the 184-residue chain is Cathelicidin-related peptide Pt_CRAMP1 (184 aa).

A signal peptide spans 1-22; sequence MEGFFWKTWLVVAAFAIGGTSS. A propeptide spanning residues 23-150 is cleaved from the precursor; the sequence is LPHKPLTYEE…EDEKDQPRRV (128 aa). 2 disulfide bridges follow: Cys-81–Cys-92 and Cys-103–Cys-120. Residues 125 to 144 show a composition bias toward acidic residues; the sequence is EDEEQNQEEEEEEEKEEDEK. Residues 125–147 are disordered; sequence EDEEQNQEEEEEEEKEEDEKDQP.

This sequence belongs to the cathelicidin family. In terms of tissue distribution, expressed by the venom gland.

It localises to the secreted. It is found in the target cell membrane. Potent antimicrobial peptide against Gram-negative (MIC=2 ug/ml against E.coli ATCC 25922, MIC=8 ug/ml against P.aeruginosa) and Gram-positive bacteria (MIC=32 ug/ml against E.faecalis, MIC=32 ug/ml against S.aureus). Adopts an amphipathic alpha helical conformation, that may allow to partition into the target membrane. High hemolytic activities have been observed on mammalian cells. This chain is Cathelicidin-related peptide Pt_CRAMP1, found in Pseudonaja textilis (Eastern brown snake).